The following is a 700-amino-acid chain: Elongation factor G (700 aa).

The tr-type G domain occupies 10-286; that stretch reads SKVRNIGIMA…AVIDYLPSPL (277 aa). GTP contacts are provided by residues 19-26, 83-87, and 137-140; these read AHIDAGKT, DTPGH, and NKMD.

The protein belongs to the TRAFAC class translation factor GTPase superfamily. Classic translation factor GTPase family. EF-G/EF-2 subfamily.

It is found in the cytoplasm. Functionally, catalyzes the GTP-dependent ribosomal translocation step during translation elongation. During this step, the ribosome changes from the pre-translocational (PRE) to the post-translocational (POST) state as the newly formed A-site-bound peptidyl-tRNA and P-site-bound deacylated tRNA move to the P and E sites, respectively. Catalyzes the coordinated movement of the two tRNA molecules, the mRNA and conformational changes in the ribosome. This chain is Elongation factor G, found in Mycolicibacterium gilvum (strain PYR-GCK) (Mycobacterium gilvum (strain PYR-GCK)).